Here is a 383-residue protein sequence, read N- to C-terminus: Sensory histidine kinase/phosphatase NtrB (383 aa).

The region spanning 147–366 (SLAHEIKNPL…TFRVLMPASK (220 aa)) is the Histidine kinase domain. Phosphohistidine; by autocatalysis is present on His-150.

Post-translationally, autophosphorylated.

The protein resides in the cytoplasm. The enzyme catalyses ATP + protein L-histidine = ADP + protein N-phospho-L-histidine.. Its function is as follows. Member of the two-component regulatory system NtrB/NtrC, which controls expression of the nitrogen-regulated (ntr) genes in response to nitrogen limitation. Under conditions of nitrogen limitation, NtrB autophosphorylates and transfers the phosphoryl group to NtrC. In the presence of nitrogen, acts as a phosphatase that dephosphorylates and inactivates NtrC. This chain is Sensory histidine kinase/phosphatase NtrB (ntrB), found in Rhizobium leguminosarum bv. phaseoli.